The following is a 652-amino-acid chain: Small ribosomal subunit protein mS39 (652 aa).

The N-terminal 37 residues, 1-37, are a transit peptide targeting the mitochondrion; the sequence is MYLSRQLRLLPRANIACSLSSSGAHYTTAAPAEDAPI. 5 PPR repeats span residues 129–163, 225–259, 260–299, 300–338, and 547–581; these read DSVV…GNPI, TPQS…QVQL, DTNT…KLRP, NLGT…GVNP, and TGQM…QHRI.

Belongs to the mitochondrion-specific ribosomal protein mS39 family.

It localises to the mitochondrion. In terms of biological role, mitochondrial protein that may have a role in mitochondrial translation. Essential for larval development. In Drosophila melanogaster (Fruit fly), this protein is Small ribosomal subunit protein mS39.